A 137-amino-acid chain; its full sequence is DNA-directed RNA polymerase I subunit RPA14 (137 aa).

The tract at residues 100 to 137 is disordered; the sequence is PPAQDFSAAPIQVSTTEKKETSIGVSATGGKKTTFADE. Position 121 is a phosphoserine (S121).

As to quaternary structure, component of the RNA polymerase I (Pol I) complex consisting of 14 subunits: RPA135, RPA190, RPC40, RPA14, RPB5, RPO26, RPA43, RPB8, RPA12, RPB10, RPC19, RPC10, RPA49 and RPA34. The complex is composed of a horseshoe-shaped core containing ten subunits (RPA135, RPA190, RPB5, RPO26, RPB8, RPB10, RPC10, RPA12, RPC19 and RPC40) where RPA135 and RPA190 form the DNA-binding cleft. Outside of the core, RPA14 and RPA43 form the stalk that mediates interactions with transcription initiation factors and newly synthesized RNA. The N-terminus is blocked.

The protein resides in the nucleus. The protein localises to the nucleolus. Its function is as follows. DNA-dependent RNA polymerases catalyze the transcription of DNA into RNA using the four ribonucleoside triphosphates as substrates. Component of RNA polymerase I (Pol I) which synthesizes ribosomal RNA precursors. RPA14 seems to play a role in the stability of subunits RPO26 and RPA43. In vitro, the RPA14-RPA43 subcomplex binds single-stranded RNA. The sequence is that of DNA-directed RNA polymerase I subunit RPA14 (RPA14) from Saccharomyces cerevisiae (strain ATCC 204508 / S288c) (Baker's yeast).